We begin with the raw amino-acid sequence, 70 residues long: Cold shock-like protein CspG (70 aa).

The CSD domain maps to 7-67 (GLVKWFNADK…GQRGPAAANV (61 aa)).

The protein localises to the cytoplasm. This chain is Cold shock-like protein CspG (cspG), found in Escherichia coli O157:H7.